Consider the following 448-residue polypeptide: MKSSKLNPVTTHKEFNGISGALGITIGLPTLTVLFYLLCNQTYSIHGINVDFAKIKSQLPITQDELWQLVFDKTCWSAYLAWFFILVILDYLLPGKSLNGVKLRDGTVLNYKINGLSMSSLLIVLLLARLFQSNSDSSLEYYLPELQFIYDNQLQLIIICFLFSFMLAVFVYIISFIPLAKPNGIGTKERILSINGNTGNPFYDWFIGRELNPRIGSWDIKLFCELRPGMLLWLLINLSCLHYQYHNLGYVTDSMIVVNLLQAFYIFDGVLNEEGCLTMIDITTDGFGFMLSFGDLAWVPWTYSLQARYLSIKGNEVNLGWTLSLLIVGLQALGFYIFRSANKQKSDFRQGKLPHLKSIQTKTGSKLLVEGWWGLSQHINYLGDWLIGLSWCLPTGFQTPLTYFYVIYFASLLIHRQVRDEMKCRAKYGEDWEKYEKLVPYKIIPYVY.

Helical transmembrane passes span 18-38 (ISGA…FYLL), 75-95 (CWSA…LLPG), 108-128 (VLNY…LLLA), 157-177 (IIIC…ISFI), 251-271 (VTDS…DGVL), 279-299 (MIDI…LAWV), and 318-338 (NLGW…FYIF). Residues Lys345, Arg349, Leu368, Trp373, and 380-381 (NY) contribute to the NADP(+) site. A helical transmembrane segment spans residues 394 to 414 (PTGFQTPLTYFYVIYFASLLI). Residues Asp420, 424–428 (CRAKY), and Tyr435 each bind NADP(+).

It belongs to the ERG4/ERG24 family.

It is found in the endoplasmic reticulum membrane. It catalyses the reaction 4,4-dimethyl-5alpha-cholesta-8,24-dien-3beta-ol + NADP(+) = 4,4-dimethyl-5alpha-cholesta-8,14,24-trien-3beta-ol + NADPH + H(+). It participates in steroid biosynthesis; zymosterol biosynthesis; zymosterol from lanosterol: step 2/6. C-14 sterol reductase; part of the third module of ergosterol biosynthesis pathway that includes the late steps of the pathway. ERG24 reduces the C14=C15 double bond of 4,4-dimethyl-cholesta-8,14,24-trienol to produce 4,4-dimethyl-cholesta-8,24-dienol. The third module or late pathway involves the ergosterol synthesis itself through consecutive reactions that mainly occur in the endoplasmic reticulum (ER) membrane. Firstly, the squalene synthase ERG9 catalyzes the condensation of 2 farnesyl pyrophosphate moieties to form squalene, which is the precursor of all steroids. Squalene synthase is crucial for balancing the incorporation of farnesyl diphosphate (FPP) into sterol and nonsterol isoprene synthesis. Secondly, the squalene epoxidase ERG1 catalyzes the stereospecific oxidation of squalene to (S)-2,3-epoxysqualene, which is considered to be a rate-limiting enzyme in steroid biosynthesis. Then, the lanosterol synthase ERG7 catalyzes the cyclization of (S)-2,3 oxidosqualene to lanosterol, a reaction that forms the sterol core. In the next steps, lanosterol is transformed to zymosterol through a complex process involving various demethylation, reduction and desaturation reactions. The lanosterol 14-alpha-demethylase ERG11 (also known as CYP51) catalyzes C14-demethylation of lanosterol to produce 4,4'-dimethyl cholesta-8,14,24-triene-3-beta-ol, which is critical for ergosterol biosynthesis. The C-14 reductase ERG24 reduces the C14=C15 double bond of 4,4-dimethyl-cholesta-8,14,24-trienol to produce 4,4-dimethyl-cholesta-8,24-dienol. 4,4-dimethyl-cholesta-8,24-dienol is substrate of the C-4 demethylation complex ERG25-ERG26-ERG27 in which ERG25 catalyzes the three-step monooxygenation required for the demethylation of 4,4-dimethyl and 4alpha-methylsterols, ERG26 catalyzes the oxidative decarboxylation that results in a reduction of the 3-beta-hydroxy group at the C-3 carbon to an oxo group, and ERG27 is responsible for the reduction of the keto group on the C-3. ERG28 has a role as a scaffold to help anchor ERG25, ERG26 and ERG27 to the endoplasmic reticulum and ERG29 regulates the activity of the iron-containing C4-methylsterol oxidase ERG25. Then, the sterol 24-C-methyltransferase ERG6 catalyzes the methyl transfer from S-adenosyl-methionine to the C-24 of zymosterol to form fecosterol. The C-8 sterol isomerase ERG2 catalyzes the reaction which results in unsaturation at C-7 in the B ring of sterols and thus converts fecosterol to episterol. The sterol-C5-desaturase ERG3 then catalyzes the introduction of a C-5 double bond in the B ring to produce 5-dehydroepisterol. The C-22 sterol desaturase ERG5 further converts 5-dehydroepisterol into ergosta-5,7,22,24(28)-tetraen-3beta-ol by forming the C-22(23) double bond in the sterol side chain. Finally, ergosta-5,7,22,24(28)-tetraen-3beta-ol is substrate of the C-24(28) sterol reductase ERG4 to produce ergosterol. The chain is Delta(14)-sterol reductase ERG24 from Candida albicans (strain SC5314 / ATCC MYA-2876) (Yeast).